The following is a 246-amino-acid chain: ATP synthase subunit a, chloroplastic (246 aa).

Transmembrane regions (helical) follow at residues 35–55 (AQVL…TFLA), 94–114 (IPFI…GALI), 132–152 (DINT…YAGL), 198–218 (LVVA…MMFL), and 219–239 (GLFT…AYIG).

The protein belongs to the ATPase A chain family. In terms of assembly, F-type ATPases have 2 components, CF(1) - the catalytic core - and CF(0) - the membrane proton channel. CF(1) has five subunits: alpha(3), beta(3), gamma(1), delta(1), epsilon(1). CF(0) has four main subunits: a, b, b' and c.

Its subcellular location is the plastid. It is found in the chloroplast thylakoid membrane. Functionally, key component of the proton channel; it plays a direct role in the translocation of protons across the membrane. The chain is ATP synthase subunit a, chloroplastic from Chara vulgaris (Common stonewort).